Reading from the N-terminus, the 423-residue chain is Enolase (423 aa).

Residue glutamine 164 participates in (2R)-2-phosphoglycerate binding. Residue glutamate 206 is the Proton donor of the active site. Residues aspartate 243, glutamate 289, and aspartate 316 each coordinate Mg(2+). (2R)-2-phosphoglycerate contacts are provided by lysine 341, arginine 370, serine 371, and lysine 392. Residue lysine 341 is the Proton acceptor of the active site.

Belongs to the enolase family. Mg(2+) serves as cofactor.

The protein localises to the cytoplasm. Its subcellular location is the secreted. It localises to the cell surface. The enzyme catalyses (2R)-2-phosphoglycerate = phosphoenolpyruvate + H2O. The protein operates within carbohydrate degradation; glycolysis; pyruvate from D-glyceraldehyde 3-phosphate: step 4/5. Catalyzes the reversible conversion of 2-phosphoglycerate (2-PG) into phosphoenolpyruvate (PEP). It is essential for the degradation of carbohydrates via glycolysis. This Desulfotalea psychrophila (strain LSv54 / DSM 12343) protein is Enolase.